The sequence spans 760 residues: Prolyl endopeptidase FAP (760 aa).

Topologically, residues 1–4 (MKTW) are cytoplasmic. A helical; Signal-anchor for type II membrane protein membrane pass occupies residues 5 to 25 (LKIVFGVATSAVLALLVMCIV). Residues 26-760 (LRPSRVHNSE…FLKQCFSLSD (735 aa)) lie on the Extracellular side of the membrane. Residues N49, N92, and N99 are each glycosylated (N-linked (GlcNAc...) asparagine). E203 and E204 together coordinate substrate. N-linked (GlcNAc...) asparagine glycans are attached at residues N227 and N314. 3 disulfide bridges follow: C321–C332, C438–C441, and C448–C466. The stretch at 481-512 (TDQEIKILEDNKELENALKNIQLPKEEIKKLK) forms a coiled coil. S624 functions as the Charge relay system in the catalytic mechanism. A disulfide bridge links C643 with C755. N679 carries N-linked (GlcNAc...) asparagine glycosylation. Residues D702 and H734 each act as charge relay system in the active site.

It belongs to the peptidase S9B family. As to quaternary structure, homodimer; homodimerization is required for activity of both plasma membrane and soluble forms. The monomer is inactive. Heterodimer with DPP4. Interacts with PLAUR; the interaction occurs at the cell surface of invadopodia membranes. Interacts with ITGB1. Interacts with ITGA3. Associates with integrin alpha-3/beta-1; the association occurs in a collagen-dependent manner at the cell surface of invadopodia membranes. In terms of processing, N-glycosylated. Post-translationally, the N-terminus may be blocked.

It is found in the cell surface. The protein resides in the cell membrane. It localises to the cell projection. The protein localises to the lamellipodium membrane. Its subcellular location is the invadopodium membrane. It is found in the ruffle membrane. The protein resides in the membrane. It localises to the secreted. The catalysed reaction is Release of an N-terminal dipeptide, Xaa-Yaa-|-Zaa-, from a polypeptide, preferentially when Yaa is Pro, provided Zaa is neither Pro nor hydroxyproline.. It catalyses the reaction Hydrolysis of Pro-|-Xaa &gt;&gt; Ala-|-Xaa in oligopeptides.. Gelatinase activity is inhibited by serine-protease inhibitors, such as phenylmethylsulfonyl fluoride (PMSF), 4-(2-aminoethyl)-benzenesulfonyl fluoride hydrochloride (AEBSF), 4-amidino phenylsulfonyl fluoride (APSF) and diisopropyl fluorophosphate (DFP), N-ethylmaleimide (NEM) and phenylmethylsulfonyl fluoride (PMSF). Dipeptidyl peptidase activity is inhibited by 2,2'-azino-bis(3-ethylbenzthiazoline-6-sulfonic acid), diisopropylfluorophosphate (DFP). Prolyl endopeptidase activity is inhibited by the boronic acid peptide Ac-Gly-BoroPro, Ac-Gly-Pro-chloromethyl ketone and Thr-Ser-Gly-chloromethyl ketone. Cell surface glycoprotein serine protease that participates in extracellular matrix degradation and involved in many cellular processes including tissue remodeling, fibrosis, wound healing, inflammation and tumor growth. Both plasma membrane and soluble forms exhibit post-proline cleaving endopeptidase activity, with a marked preference for Ala/Ser-Gly-Pro-Ser/Asn/Ala consensus sequences, on substrate such as alpha-2-antiplasmin SERPINF2 and SPRY2. Degrade also gelatin, heat-denatured type I collagen, but not native collagen type I and IV, vibronectin, tenascin, laminin, fibronectin, fibrin or casein. Also has dipeptidyl peptidase activity, exhibiting the ability to hydrolyze the prolyl bond two residues from the N-terminus of synthetic dipeptide substrates provided that the penultimate residue is proline, with a preference for Ala-Pro, Ile-Pro, Gly-Pro, Arg-Pro and Pro-Pro. Natural neuropeptide hormones for dipeptidyl peptidase are the neuropeptide Y (NPY), peptide YY (PYY), substance P (TAC1) and brain natriuretic peptide 32 (NPPB). The plasma membrane form, in association with either DPP4, PLAUR or integrins, is involved in the pericellular proteolysis of the extracellular matrix (ECM), and hence promotes cell adhesion, migration and invasion through the ECM. Plays a role in tissue remodeling during development and wound healing. Participates in the cell invasiveness towards the ECM in malignant melanoma cancers. Enhances tumor growth progression by increasing angiogenesis, collagen fiber degradation and apoptosis and by reducing antitumor response of the immune system. Promotes glioma cell invasion through the brain parenchyma by degrading the proteoglycan brevican. Acts as a tumor suppressor in melanocytic cells through regulation of cell proliferation and survival in a serine protease activity-independent manner. The chain is Prolyl endopeptidase FAP from Bos taurus (Bovine).